The chain runs to 338 residues: Ferredoxin--NADP reductase (338 aa).

Positions 38, 46, 51, 91, 125, 291, and 331 each coordinate FAD.

This sequence belongs to the ferredoxin--NADP reductase type 2 family. Homodimer. The cofactor is FAD.

It catalyses the reaction 2 reduced [2Fe-2S]-[ferredoxin] + NADP(+) + H(+) = 2 oxidized [2Fe-2S]-[ferredoxin] + NADPH. In Orientia tsutsugamushi (strain Ikeda) (Rickettsia tsutsugamushi), this protein is Ferredoxin--NADP reductase.